The following is a 393-amino-acid chain: Formate-dependent phosphoribosylglycinamide formyltransferase (393 aa).

Residues 22 to 23 (EL) and E82 each bind N(1)-(5-phospho-beta-D-ribosyl)glycinamide. Residues R114, K155, 160–165 (SSGKGQ), 195–198 (EGFI), and E203 each bind ATP. The ATP-grasp domain occupies 119–308 (RLAAEELGLP…EFALHARAIL (190 aa)). 2 residues coordinate Mg(2+): E267 and E279. N(1)-(5-phospho-beta-D-ribosyl)glycinamide contacts are provided by residues D286, K356, and 363–364 (RR).

Belongs to the PurK/PurT family. In terms of assembly, homodimer.

The enzyme catalyses N(1)-(5-phospho-beta-D-ribosyl)glycinamide + formate + ATP = N(2)-formyl-N(1)-(5-phospho-beta-D-ribosyl)glycinamide + ADP + phosphate + H(+). It functions in the pathway purine metabolism; IMP biosynthesis via de novo pathway; N(2)-formyl-N(1)-(5-phospho-D-ribosyl)glycinamide from N(1)-(5-phospho-D-ribosyl)glycinamide (formate route): step 1/1. In terms of biological role, involved in the de novo purine biosynthesis. Catalyzes the transfer of formate to 5-phospho-ribosyl-glycinamide (GAR), producing 5-phospho-ribosyl-N-formylglycinamide (FGAR). Formate is provided by PurU via hydrolysis of 10-formyl-tetrahydrofolate. The protein is Formate-dependent phosphoribosylglycinamide formyltransferase of Azotobacter vinelandii (strain DJ / ATCC BAA-1303).